The chain runs to 184 residues: Ribosome-recycling factor (184 aa).

This sequence belongs to the RRF family.

The protein resides in the cytoplasm. Functionally, responsible for the release of ribosomes from messenger RNA at the termination of protein biosynthesis. May increase the efficiency of translation by recycling ribosomes from one round of translation to another. This Mycoplasma pneumoniae (strain ATCC 29342 / M129 / Subtype 1) (Mycoplasmoides pneumoniae) protein is Ribosome-recycling factor.